The following is a 431-amino-acid chain: Probable pectate lyase 1 (431 aa).

Residues 1–20 form the signal peptide; that stretch reads MAVLPTWLLAMMCLLFFVGA. N-linked (GlcNAc...) asparagine glycosylation is found at N23, N28, and N65. Residues D227, D251, and D255 each contribute to the Ca(2+) site. R307 is an active-site residue.

This sequence belongs to the polysaccharide lyase 1 family. Requires Ca(2+) as cofactor. In terms of tissue distribution, expressed in flowers, but not in leaves.

The catalysed reaction is Eliminative cleavage of (1-&gt;4)-alpha-D-galacturonan to give oligosaccharides with 4-deoxy-alpha-D-galact-4-enuronosyl groups at their non-reducing ends.. The protein operates within glycan metabolism; pectin degradation; 2-dehydro-3-deoxy-D-gluconate from pectin: step 2/5. The chain is Probable pectate lyase 1 from Arabidopsis thaliana (Mouse-ear cress).